Reading from the N-terminus, the 529-residue chain is Phospholipase A1-Igamma2, chloroplastic (529 aa).

The transit peptide at 1 to 43 (MAAIPSHNNLLTINHKNSITGSSSLNTNFSEINFPAKFRVATR) directs the protein to the chloroplast. Residues 316-320 (GHSLG) carry the GXSXG motif. Residue Ser318 is the Acyl-ester intermediate of the active site. Residues Asp381 and His437 each act as charge relay system in the active site.

Belongs to the AB hydrolase superfamily. Lipase family. In terms of assembly, interacts with SBP1. Widely expressed. Highly expressed in leaves and stems.

It is found in the plastid. Its subcellular location is the chloroplast. The catalysed reaction is 1,2-dihexadecanoyl-sn-glycero-3-phosphocholine + H2O = 2-hexadecanoyl-sn-glycero-3-phosphocholine + hexadecanoate + H(+). It carries out the reaction a 1,2-diacyl-3-O-(beta-D-galactosyl)-sn-glycerol + H2O = an acyl-3-O-(beta-D-galactosyl)-sn-glycerol + a fatty acid + H(+). It catalyses the reaction a 1,2-diacyl-3-O-[alpha-D-galactosyl-(1-&gt;6)-beta-D-galactosyl]-sn-glycerol + H2O = acyl-3-O-[alpha-D-galactosyl-(1-&gt;6)-beta-D-galactosyl]-sn-glycerol + a fatty acid + H(+). The enzyme catalyses a triacylglycerol + H2O = a diacylglycerol + a fatty acid + H(+). Its function is as follows. Acylhydrolase with broad specificity. Catalyzes the hydrolysis of phosphatidylcholine at the sn-1 position. Possesses moderate activity toward phosphatidylcholine (PC), monogalactosyldiacylglycerol (MGDG), digalactosyldiacylglycerol (DGDG) and triacylglycerol (TAG). This Arabidopsis thaliana (Mouse-ear cress) protein is Phospholipase A1-Igamma2, chloroplastic.